The chain runs to 505 residues: Flagellin (505 aa).

Belongs to the bacterial flagellin family.

The protein localises to the secreted. It localises to the bacterial flagellum. Flagellin is the subunit protein which polymerizes to form the filaments of bacterial flagella. This chain is Flagellin (fliC), found in Salmonella moscow.